The primary structure comprises 339 residues: Annexin A2 (339 aa).

The residue at position 2 (Ser-2) is an N-acetylserine. The segment at 2–24 is S100A10-binding site; the sequence is STVHEILCKLSLEGDHSTPPSAY. Tyr-24 carries the phosphotyrosine; by SRC modification. Ser-26 carries the phosphoserine; by PKC modification. Annexin repeat units follow at residues 33-104 and 105-176; these read FDAE…GLLK and TPAQ…ALAK. Lys-49 carries the N6-acetyllysine; alternate modification. Lys-49 is covalently cross-linked (Glycyl lysine isopeptide (Lys-Gly) (interchain with G-Cter in SUMO1); alternate). Residue Lys-49 forms a Glycyl lysine isopeptide (Lys-Gly) (interchain with G-Cter in SUMO2); alternate linkage. Lys-152 is modified (N6-acetyllysine). Ser-184 is subject to Phosphoserine. 2 Annexin repeats span residues 189-261 and 265-336; these read ELID…NLVQ and NKPL…YLCG. At Tyr-199 the chain carries Phosphotyrosine. N6-acetyllysine is present on Lys-227.

It belongs to the annexin family. In terms of assembly, heterotetramer containing 2 light chains of S100A10/p11 and 2 heavy chains of ANXA2/p36. Interacts with ATP1B1. Interacts with DYSF. Interacts with COCH. Interacts (via repeat Annexin 1) with PCSK9 (via the C-terminal domain); the interaction inhibits the degradation of LDLR. Interacts with CEACAM1 (via the cytoplasmic domain); this interaction is regulated by phosphorylation of CEACAM1. Interacts with APPL2 and APPL1; targets APPL2 to endosomes and acting in parallel to RAB5A. Interacts with S100A4. May interact with UBAP2. Interacts with PLEKHG4B; this interaction is required for PLEKHG4B localization to cell-cell adhesions. Post-translationally, ISGylated.

The protein resides in the secreted. It is found in the extracellular space. The protein localises to the extracellular matrix. It localises to the basement membrane. Its subcellular location is the melanosome. Calcium-regulated membrane-binding protein whose affinity for calcium is greatly enhanced by anionic phospholipids. It binds two calcium ions with high affinity. May be involved in heat-stress response. Inhibits PCSK9-enhanced LDLR degradation, probably reduces PCSK9 protein levels via a translational mechanism but also competes with LDLR for binding with PCSK9. Binds to endosomes damaged by phagocytosis of particulate wear debris and participates in endosomal membrane stabilization, thereby limiting NLRP3 inflammasome activation. Required for endothelial cell surface plasmin generation and may support fibrinolytic surveillance and neoangiogenesis. The protein is Annexin A2 (ANXA2) of Bos taurus (Bovine).